A 122-amino-acid polypeptide reads, in one-letter code: Large ribosomal subunit protein bL12 (122 aa).

It belongs to the bacterial ribosomal protein bL12 family. In terms of assembly, homodimer. Part of the ribosomal stalk of the 50S ribosomal subunit. Forms a multimeric L10(L12)X complex, where L10 forms an elongated spine to which 2 to 4 L12 dimers bind in a sequential fashion. Binds GTP-bound translation factors.

Its function is as follows. Forms part of the ribosomal stalk which helps the ribosome interact with GTP-bound translation factors. Is thus essential for accurate translation. This chain is Large ribosomal subunit protein bL12, found in Histophilus somni (strain 129Pt) (Haemophilus somnus).